A 303-amino-acid chain; its full sequence is Geranylgeranyl pyrophosphate synthase (303 aa).

Isopentenyl diphosphate is bound by residues K32, R35, and H64. 2 residues coordinate Mg(2+): D71 and D75. R80 contributes to the dimethylallyl diphosphate binding site. An isopentenyl diphosphate-binding site is contributed by R81. Dimethylallyl diphosphate is bound by residues K158, T159, Q192, K209, and K219.

The protein belongs to the FPP/GGPP synthase family. As to quaternary structure, homooligomer. Requires Mg(2+) as cofactor.

It localises to the cytoplasm. The catalysed reaction is isopentenyl diphosphate + dimethylallyl diphosphate = (2E)-geranyl diphosphate + diphosphate. It catalyses the reaction isopentenyl diphosphate + (2E)-geranyl diphosphate = (2E,6E)-farnesyl diphosphate + diphosphate. The enzyme catalyses isopentenyl diphosphate + (2E,6E)-farnesyl diphosphate = (2E,6E,10E)-geranylgeranyl diphosphate + diphosphate. Its pathway is isoprenoid biosynthesis; farnesyl diphosphate biosynthesis; farnesyl diphosphate from geranyl diphosphate and isopentenyl diphosphate: step 1/1. The protein operates within isoprenoid biosynthesis; geranyl diphosphate biosynthesis; geranyl diphosphate from dimethylallyl diphosphate and isopentenyl diphosphate: step 1/1. It participates in isoprenoid biosynthesis; geranylgeranyl diphosphate biosynthesis; geranylgeranyl diphosphate from farnesyl diphosphate and isopentenyl diphosphate: step 1/1. Catalyzes the trans-addition of the three molecules of IPP onto DMAPP to form geranylgeranyl pyrophosphate, an important precursor of carotenoids and geranylated proteins. This Dictyostelium discoideum (Social amoeba) protein is Geranylgeranyl pyrophosphate synthase (ggps1).